Reading from the N-terminus, the 349-residue chain is Cobalt-precorrin-5B C(1)-methyltransferase (349 aa).

Belongs to the CbiD family.

The enzyme catalyses Co-precorrin-5B + S-adenosyl-L-methionine = Co-precorrin-6A + S-adenosyl-L-homocysteine. It functions in the pathway cofactor biosynthesis; adenosylcobalamin biosynthesis; cob(II)yrinate a,c-diamide from sirohydrochlorin (anaerobic route): step 6/10. In terms of biological role, catalyzes the methylation of C-1 in cobalt-precorrin-5B to form cobalt-precorrin-6A. This is Cobalt-precorrin-5B C(1)-methyltransferase from Saccharolobus islandicus (strain L.S.2.15 / Lassen #1) (Sulfolobus islandicus).